The chain runs to 429 residues: Chordin-like protein 2 (429 aa).

An N-terminal signal peptide occupies residues 1-25 (MVPEVRVLSSLLGLALLWFPLDSHA). 2 consecutive VWFC domains span residues 31–96 (MFCL…PKCV) and 109–175 (KSCQ…QACK). Asn-114 is a glycosylation site (N-linked (GlcNAc...) asparagine). Ser-182 is subject to Phosphoserine; by FAM20C. Residues 182–224 (SDEEDSVQSLHGVRHPQDPCSSDAGRKRGPGTPAPTGLSAPLS) are disordered. The region spanning 250-315 (KACVHGGKTY…VAGKCCKICP (66 aa)) is the VWFC 3 domain.

In terms of assembly, interacts with GDF5. May interact with BMP2, BMP4, BMP5, BMP6, BMP7 and INHBA. Phosphorylated by FAM20C in the extracellular medium. As to expression, highly expressed in uterus. Moderately expressed in heart, liver, prostate, testis and ovary. Weakly expressed in skeletal muscle, kidney, spleen, small intestine and colon. Expressed in the secretory epithelial cells of uterine endometrium, fallopian tubes, endocervical glands, bladder and prostate, as well as the transitional epithelium of the urinary bladder, and in bone osteoblasts (at protein level). In normal cartilage, expression was confined in a few chondrocytes in the superficial zone as well as in the middle zone. In diseased cartilage coming from osteoarthritic patients, expression was limited to the middle zone of chondrocytes. Isoform 1 and isoform 2 are expressed in fetal cerebellum and heart, while only isoform 2 is detected in fetal spleen. Isoform 2 present in plasma.

It localises to the secreted. The protein localises to the cytoplasm. In terms of biological role, may inhibit BMPs activity by blocking their interaction with their receptors. Has a negative regulator effect on the cartilage formation/regeneration from immature mesenchymal cells, by preventing or reducing the rate of matrix accumulation. Implicated in tumor angiogenesis. May play a role during myoblast and osteoblast differentiation, and maturation. The sequence is that of Chordin-like protein 2 (CHRDL2) from Homo sapiens (Human).